We begin with the raw amino-acid sequence, 506 residues long: Tabersonine 6,7-epoxidase isoform 1 (506 aa).

Residues methionine 1–alanine 21 form a helical membrane-spanning segment. Residues asparagine 173 and asparagine 261 are each glycosylated (N-linked (GlcNAc...) asparagine). Residue cysteine 441 participates in heme binding.

It belongs to the cytochrome P450 family. Heme is required as a cofactor. In terms of tissue distribution, mainly expressed in roots.

It localises to the endoplasmic reticulum membrane. It catalyses the reaction (-)-tabersonine + reduced [NADPH--hemoprotein reductase] + O2 = lochnericine + oxidized [NADPH--hemoprotein reductase] + H2O + H(+). Its pathway is alkaloid biosynthesis. Component of the monoterpenoid indole alkaloids (MIAs, e.g. echitovenine, tabersonine, lochnericine, 19-hydroxytabersonine and horhammericine) biosynthetic pathway; MIAs are used in cancer treatment and other medical applications. Cytochrome P450 catalyzing the conversion of tabersonine to lochnericine. This is Tabersonine 6,7-epoxidase isoform 1 from Catharanthus roseus (Madagascar periwinkle).